The primary structure comprises 131 residues: Protein Turandot M (131 aa).

The first 23 residues, 1-23, serve as a signal peptide directing secretion; the sequence is MNPTIYLSCLMVFSVFLLGKVNA.

The protein belongs to the Turandot family.

It is found in the secreted. Functionally, a humoral factor that may play a role in stress tolerance. Requires Mekk1 expression in the fat body to regulate response to septic injury and consequent immune response. The chain is Protein Turandot M from Drosophila melanogaster (Fruit fly).